The primary structure comprises 61 residues: Protein SspF (61 aa).

Belongs to the alpha/beta-type SASP family.

Its function is as follows. May play some important role in either sporulation or the dormant spore. This Bacillus subtilis (strain 168) protein is Protein SspF (sspF).